The following is a 320-amino-acid chain: Cytochrome f (320 aa).

Residues 1–35 (MQNRNTFSWVKDQMSRFISVSIMIYVITRTSISNA) form the signal peptide. Positions 36, 56, 59, and 60 each coordinate heme. The helical transmembrane segment at 286-306 (VQGLLFFFASVILAQIFLVLK) threads the bilayer.

This sequence belongs to the cytochrome f family. The 4 large subunits of the cytochrome b6-f complex are cytochrome b6, subunit IV (17 kDa polypeptide, petD), cytochrome f and the Rieske protein, while the 4 small subunits are PetG, PetL, PetM and PetN. The complex functions as a dimer. It depends on heme as a cofactor.

It localises to the plastid. Its subcellular location is the chloroplast thylakoid membrane. Functionally, component of the cytochrome b6-f complex, which mediates electron transfer between photosystem II (PSII) and photosystem I (PSI), cyclic electron flow around PSI, and state transitions. The polypeptide is Cytochrome f (Ceratophyllum demersum (Rigid hornwort)).